The following is a 155-amino-acid chain: Small ribosomal subunit protein uS7 (155 aa).

The protein belongs to the universal ribosomal protein uS7 family. In terms of assembly, part of the 30S ribosomal subunit. Contacts proteins S9 and S11.

Its function is as follows. One of the primary rRNA binding proteins, it binds directly to 16S rRNA where it nucleates assembly of the head domain of the 30S subunit. Is located at the subunit interface close to the decoding center, probably blocks exit of the E-site tRNA. This is Small ribosomal subunit protein uS7 from Amoebophilus asiaticus (strain 5a2).